We begin with the raw amino-acid sequence, 253 residues long: Giant extracellular hemoglobin linker 1 chain (253 aa).

The 43-residue stretch at 89-131 (HHCDDDHLSCKDVAFTCIGHNLVCDGHKDCLNGHDEDEETCSI) folds into the LDL-receptor class A domain. 3 cysteine pairs are disulfide-bonded: Cys91–Cys105, Cys98–Cys118, and Cys112–Cys129.

Disulfide-linked dimer of identical chains. A model is proposed for the subunit structure of the Tylorrhynchus hemoglobin, consisting of 216 polypeptide chains, 192 heme-containing chains, and 24 linker chains.

Functionally, acts as a linker for the assembly of heme-containing chains in the construction of giant hemoglobin. In Tylorrhynchus heterochetus (Japanese palolo worm), this protein is Giant extracellular hemoglobin linker 1 chain.